A 603-amino-acid polypeptide reads, in one-letter code: Complement factor I (603 aa).

The first 18 residues, 1–18 (MKLAHLSLFLLALHLSSS), serve as a signal peptide directing secretion. 20 cysteine pairs are disulfide-bonded: Cys-36–Cys-260, Cys-46–Cys-57, Cys-51–Cys-62, Cys-64–Cys-96, Cys-70–Cys-89, Cys-78–Cys-109, Cys-144–Cys-186, Cys-157–Cys-219, Cys-191–Cys-201, Cys-234–Cys-252, Cys-246–Cys-261, Cys-264–Cys-276, Cys-271–Cys-289, Cys-283–Cys-298, Cys-348–Cys-473, Cys-386–Cys-402, Cys-394–Cys-464, Cys-487–Cys-551, Cys-515–Cys-530, and Cys-541–Cys-570. One can recognise a Kazal-like domain in the interval 58 to 111 (IEGTCICKLPYQCPRAGTPVCAMNGRSYPTYCHQKSFECLHPEIKFSHNGTCAA). Asn-106, Asn-116, Asn-174, and Asn-182 each carry an N-linked (GlcNAc...) asparagine glycan. Positions 117–217 (VSLIYGRTKT…TELSNGLAGV (101 aa)) constitute an SRCR domain. LDL-receptor class A domains lie at 218–262 (VCYK…LCCK) and 263–299 (GCRG…SRCE). Residues Lys-244, Asn-247, Val-249, Asp-251, Asp-257, and Glu-258 each contribute to the Ca(2+) site. Asn-267 carries an N-linked (GlcNAc...) asparagine glycan. Ca(2+)-binding residues include Tyr-281, Asn-284, Glu-286, Asp-288, Asp-294, and Glu-295. Residues 361–594 (VIGGKPANVG…YFDWISYHVG (234 aa)) enclose the Peptidase S1 domain. Residues His-401 and Asp-449 each act as charge relay system in the active site. An N-linked (GlcNAc...) asparagine glycan is attached at Asn-514. Catalysis depends on Ser-545, which acts as the Charge relay system. N-linked (GlcNAc...) asparagine glycosylation occurs at Asn-556.

Belongs to the peptidase S1 family. As to quaternary structure, heterodimer of a light and heavy chains; disulfide-linked. The fully processed and mature protein circulates as a zymogen, and is allosterically activated by substrate-induced remodeling of the active site. Interacts with C3b. Interacts with complement factor H. As to expression, expressed in the liver by hepatocytes. Also present in other cells such as monocytes, fibroblasts or keratinocytes.

It localises to the secreted. The protein localises to the extracellular space. The enzyme catalyses Inactivates complement subcomponents C3b, iC3b and C4b by proteolytic cleavage.. Its function is as follows. Trypsin-like serine protease that plays an essential role in regulating the immune response by controlling all complement pathways. Inhibits these pathways by cleaving three peptide bonds in the alpha-chain of C3b and two bonds in the alpha-chain of C4b thereby inactivating these proteins. Essential cofactors for these reactions include factor H and C4BP in the fluid phase and membrane cofactor protein/CD46 and CR1 on cell surfaces. The presence of these cofactors on healthy cells allows degradation of deposited C3b by CFI in order to prevent undesired complement activation, while in apoptotic cells or microbes, the absence of such cofactors leads to C3b-mediated complement activation and subsequent opsonization. This chain is Complement factor I (Cfi), found in Mus musculus (Mouse).